The following is a 390-amino-acid chain: NADH-quinone oxidoreductase subunit D (390 aa).

This sequence belongs to the complex I 49 kDa subunit family. NDH-1 is composed of 14 different subunits. Subunits NuoB, C, D, E, F, and G constitute the peripheral sector of the complex.

The protein resides in the cell membrane. It catalyses the reaction a quinone + NADH + 5 H(+)(in) = a quinol + NAD(+) + 4 H(+)(out). In terms of biological role, NDH-1 shuttles electrons from NADH, via FMN and iron-sulfur (Fe-S) centers, to quinones in the respiratory chain. The immediate electron acceptor for the enzyme in this species is believed to be ubiquinone. Couples the redox reaction to proton translocation (for every two electrons transferred, four hydrogen ions are translocated across the cytoplasmic membrane), and thus conserves the redox energy in a proton gradient. This is NADH-quinone oxidoreductase subunit D from Wolbachia pipientis wMel.